The following is a 451-amino-acid chain: Tol-Pal system protein TolB 1 (451 aa).

The N-terminal stretch at 1–19 is a signal peptide; the sequence is MTLRMLFAFALLAAAPAQA. Low complexity predominate over residues 18 to 29; sequence QAQQTEPQPAEE. 2 disordered regions span residues 18 to 37 and 431 to 451; these read QAQQTEPQPAEEGGLSGTVS and NERRLSTPGDASDPAWGPLLP.

This sequence belongs to the TolB family. The Tol-Pal system is composed of five core proteins: the inner membrane proteins TolA, TolQ and TolR, the periplasmic protein TolB and the outer membrane protein Pal. They form a network linking the inner and outer membranes and the peptidoglycan layer.

It is found in the periplasm. Part of the Tol-Pal system, which plays a role in outer membrane invagination during cell division and is important for maintaining outer membrane integrity. The sequence is that of Tol-Pal system protein TolB 1 from Novosphingobium aromaticivorans (strain ATCC 700278 / DSM 12444 / CCUG 56034 / CIP 105152 / NBRC 16084 / F199).